A 1846-amino-acid polypeptide reads, in one-letter code: C2 domain-containing protein (1846 aa).

Residues 16-36 (NTEKEEGKNAEINENNDPNTQ) are disordered. Over residues 17 to 26 (TEKEEGKNAE) the composition is skewed to basic and acidic residues. Polar residues predominate over residues 27-36 (INENNDPNTQ). In terms of domain architecture, C2 spans 497–623 (VPRYRQRGDI…FNEKNVRRNK (127 aa)). Basic and acidic residues-rich tracts occupy residues 1193-1211 (DEHT…DNYK) and 1230-1243 (KDDH…KVSK). Disordered stretches follow at residues 1193-1244 (DEHT…VSKS), 1346-1370 (KYTI…KKQD), 1456-1635 (KNER…KKRV), 1652-1692 (NEKM…NNER), and 1827-1846 (EEPS…VRKN). Residues 1349-1506 (INEKRDDIKT…DENMKEEQKM (158 aa)) are a coiled coil. Basic and acidic residues-rich tracts occupy residues 1456–1474 (KNER…QKDK), 1481–1629 (ESRD…MRRE), 1652–1663 (NEKMKKKEEKEE), and 1670–1692 (KEDI…NNER). Positions 1834-1846 (SPQKKKIVIVRKN) are enriched in basic residues.

Its subcellular location is the membrane. Functionally, binds calcium and phospholipids. Regulates microneme secretion. This Plasmodium falciparum (isolate 3D7) protein is C2 domain-containing protein.